A 738-amino-acid polypeptide reads, in one-letter code: Glucan 1,4-alpha-glucosidase SusB (738 aa).

The signal sequence occupies residues Met-1 to Ala-21. Glu-194 is a binding site for Ca(2+). Residues Pro-215 to Ser-217, His-437 to Glu-439, and His-507 to Glu-508 each bind substrate. 3 residues coordinate Ca(2+): Glu-508, Glu-526, and Glu-532. The Proton donor/acceptor role is filled by Glu-532.

Belongs to the glycosyl hydrolase 97 family. In terms of assembly, monomer. Requires Ca(2+) as cofactor.

It is found in the periplasm. The enzyme catalyses Hydrolysis of terminal (1-&gt;4)-linked alpha-D-glucose residues successively from non-reducing ends of the chains with release of beta-D-glucose.. It participates in glycan degradation; starch degradation. In terms of biological role, glucoamylase that hydrolyzes alpha-1,4-glucosidic linkages, alpha-1,6-, alpha-1,3- and alpha-1,2-glucosidic linkages during starch degradation. This Bacteroides thetaiotaomicron (strain ATCC 29148 / DSM 2079 / JCM 5827 / CCUG 10774 / NCTC 10582 / VPI-5482 / E50) protein is Glucan 1,4-alpha-glucosidase SusB (susB).